A 158-amino-acid polypeptide reads, in one-letter code: Transcription elongation factor GreA (158 aa).

This sequence belongs to the GreA/GreB family.

Functionally, necessary for efficient RNA polymerase transcription elongation past template-encoded arresting sites. The arresting sites in DNA have the property of trapping a certain fraction of elongating RNA polymerases that pass through, resulting in locked ternary complexes. Cleavage of the nascent transcript by cleavage factors such as GreA or GreB allows the resumption of elongation from the new 3'terminus. GreA releases sequences of 2 to 3 nucleotides. The polypeptide is Transcription elongation factor GreA (Sinorhizobium medicae (strain WSM419) (Ensifer medicae)).